The primary structure comprises 394 residues: Ceramide glucosyltransferase (394 aa).

Residues 1-10 lie on the Lumenal side of the membrane; that stretch reads MALLDLALEG. The chain crosses the membrane as a helical span at residues 11-32; the sequence is MAVFGFVLFLVLWLMHFMAIIY. Residues 33 to 195 are Cytoplasmic-facing; the sequence is TRLHLNKKAT…QVYFGTSHPR (163 aa). Position 92 (aspartate 92) is a short sequence motif, D1. At lysine 117 the chain carries N6-acetyllysine. Residue aspartate 144 is a short sequence motif, D2. A helical membrane pass occupies residues 196–215; sequence YYISANVTGFKCVTGMSCLM. Over 216–287 the chain is Lumenal; it reads RKDVLDQAGG…KLRINMLPAT (72 aa). Aspartate 236 is a short sequence motif (D3). Aspartate 236 acts as the Proton acceptor in catalysis. A (Q/R)XXRW motif is present at residues 272-276; that stretch reads RMIRW. A helical transmembrane segment spans residues 288 to 304; the sequence is IICEPISECFVASLIIG. The Cytoplasmic segment spans residues 305–309; sequence WAAHH. Residues 310 to 328 traverse the membrane as a helical segment; that stretch reads VFRWDIMVFFMCHCLAWFI. Over 329–348 the chain is Lumenal; sequence FDYIQLRGVQGGTLCFSKLD. A helical membrane pass occupies residues 349–369; that stretch reads YAVAWFIRESMTIYIFLSALW. At 370-394 the chain is on the cytoplasmic side; the sequence is DPTISWRTGRYRLRCGGTAEEILDV.

The protein belongs to the glycosyltransferase 2 family. As to quaternary structure, interacts with RTN1; regulates the ceramide glucosyltransferase activity of UGCG. Found in all tissues examined.

The protein localises to the golgi apparatus membrane. It carries out the reaction an N-acylsphing-4-enine + UDP-alpha-D-glucose = a beta-D-glucosyl-(1&lt;-&gt;1')-N-acylsphing-4-enine + UDP + H(+). The catalysed reaction is UDP-alpha-D-xylose + an N-acylsphing-4-enine = a beta-D-xylosyl-(1&lt;-&gt;1')-N-acylsphing-4-enine + UDP + H(+). The enzyme catalyses N-(9Z-octadecenoyl)-sphing-4-enine + UDP-alpha-D-xylose = beta-D-xylosyl-(1&lt;-&gt;1')-N-(9Z-octadecenoyl)-sphing-4-enine + UDP + H(+). It functions in the pathway lipid metabolism; sphingolipid metabolism. In terms of biological role, participates in the initial step of the glucosylceramide-based glycosphingolipid/GSL synthetic pathway at the cytosolic surface of the Golgi. Catalyzes the transfer of glucose from UDP-glucose to ceramide to produce glucosylceramide/GlcCer (such as beta-D-glucosyl-(1&lt;-&gt;1')-N-acylsphing-4-enine). GlcCer is the core component of glycosphingolipids/GSLs, amphipathic molecules consisting of a ceramide lipid moiety embedded in the outer leaflet of the membrane, linked to one of hundreds of different externally oriented oligosaccharide structures. Glycosphingolipids are essential components of membrane microdomains that mediate membrane trafficking and signal transduction, implicated in many fundamental cellular processes, including growth, differentiation, migration, morphogenesis, cell-to-cell and cell-to-matrix interactions. They are required for instance in the proper development and functioning of the nervous system. As an example of their role in signal transduction, they regulate the leptin receptor/LEPR in the leptin-mediated signaling pathway. They also play an important role in the establishment of the skin barrier regulating keratinocyte differentiation and the proper assembly of the cornified envelope. The biosynthesis of GSLs is also required for the proper intestinal endocytic uptake of nutritional lipids. Catalyzes the synthesis of xylosylceramide/XylCer (such as beta-D-xylosyl-(1&lt;-&gt;1')-N-acylsphing-4-enine) using UDP-Xyl as xylose donor. The protein is Ceramide glucosyltransferase of Homo sapiens (Human).